A 453-amino-acid chain; its full sequence is Bifunctional protein GlmU (453 aa).

The interval 1-225 (MNIVILAAGT…EWETLGVNSK (225 aa)) is pyrophosphorylase. UDP-N-acetyl-alpha-D-glucosamine is bound by residues 6-9 (LAAG), Lys20, Gln71, 76-77 (GT), 98-100 (YGD), Gly135, Glu150, Asn165, and Asn223. Asp100 serves as a coordination point for Mg(2+). Position 223 (Asn223) interacts with Mg(2+). Residues 226–246 (AQLAELERIHQRNVADALLVD) form a linker region. Residues 247-453 (GVTLADPARV…GYVRPVKKKS (207 aa)) form an N-acetyltransferase region. UDP-N-acetyl-alpha-D-glucosamine is bound by residues Arg329 and Lys347. His359 (proton acceptor) is an active-site residue. UDP-N-acetyl-alpha-D-glucosamine-binding residues include Tyr362 and Asn373. Acetyl-CoA-binding positions include Ala376, 382–383 (NY), Ser401, and Ala419.

This sequence in the N-terminal section; belongs to the N-acetylglucosamine-1-phosphate uridyltransferase family. The protein in the C-terminal section; belongs to the transferase hexapeptide repeat family. In terms of assembly, homotrimer. Requires Mg(2+) as cofactor.

Its subcellular location is the cytoplasm. It carries out the reaction alpha-D-glucosamine 1-phosphate + acetyl-CoA = N-acetyl-alpha-D-glucosamine 1-phosphate + CoA + H(+). The catalysed reaction is N-acetyl-alpha-D-glucosamine 1-phosphate + UTP + H(+) = UDP-N-acetyl-alpha-D-glucosamine + diphosphate. Its pathway is nucleotide-sugar biosynthesis; UDP-N-acetyl-alpha-D-glucosamine biosynthesis; N-acetyl-alpha-D-glucosamine 1-phosphate from alpha-D-glucosamine 6-phosphate (route II): step 2/2. It functions in the pathway nucleotide-sugar biosynthesis; UDP-N-acetyl-alpha-D-glucosamine biosynthesis; UDP-N-acetyl-alpha-D-glucosamine from N-acetyl-alpha-D-glucosamine 1-phosphate: step 1/1. It participates in bacterial outer membrane biogenesis; LPS lipid A biosynthesis. Functionally, catalyzes the last two sequential reactions in the de novo biosynthetic pathway for UDP-N-acetylglucosamine (UDP-GlcNAc). The C-terminal domain catalyzes the transfer of acetyl group from acetyl coenzyme A to glucosamine-1-phosphate (GlcN-1-P) to produce N-acetylglucosamine-1-phosphate (GlcNAc-1-P), which is converted into UDP-GlcNAc by the transfer of uridine 5-monophosphate (from uridine 5-triphosphate), a reaction catalyzed by the N-terminal domain. In Burkholderia orbicola (strain MC0-3), this protein is Bifunctional protein GlmU.